Consider the following 553-residue polypeptide: Putative transport protein YidE (553 aa).

5 helical membrane passes run 4–24, 28–48, 65–85, 95–115, and 158–178; these read IALT…IGNV, GIGL…HFVS, FGLI…FFAS, LFAV…HKLF, and MSYA…MWML. RCK C-terminal domains are found at residues 191-276 and 279-361; these read QQHE…VIGQ and DTSL…VLGN. The next 6 membrane-spanning stretches (helical) occupy residues 371-391, 393-413, 439-459, 464-484, 493-513, and 533-553; these read MLPV…PVFV, GFPA…ALIL, IVLF…NTLV, LSWI…VGIL, YLTM…LAFA, and LVMF…WSIG.

Belongs to the AAE transporter (TC 2.A.81) family. YidE subfamily.

The protein localises to the cell membrane. This chain is Putative transport protein YidE, found in Shigella boydii serotype 4 (strain Sb227).